Consider the following 25-residue polypeptide: uncharacterized protein (25 aa).

Its subcellular location is the plastid. It localises to the chloroplast. This is an uncharacterized protein from Trieres chinensis (Marine centric diatom).